We begin with the raw amino-acid sequence, 242 residues long: Probable septum site-determining protein MinC (242 aa).

This sequence belongs to the MinC family. As to quaternary structure, interacts with MinD and FtsZ.

Cell division inhibitor that blocks the formation of polar Z ring septums. Rapidly oscillates between the poles of the cell to destabilize FtsZ filaments that have formed before they mature into polar Z rings. Prevents FtsZ polymerization. The chain is Probable septum site-determining protein MinC from Thioalkalivibrio sulfidiphilus (strain HL-EbGR7).